The chain runs to 944 residues: Protein phosphatase 1 regulatory subunit 37 homolog (944 aa).

A disordered region spans residues Q42–I71. 5 LRR repeats span residues S203 to F224, S232 to A255, S262 to I282, G290 to Q311, and S318 to C338. The segment at E517–S598 is disordered. The span at G522–T542 shows a compositional bias: basic and acidic residues. 2 stretches are compositionally biased toward polar residues: residues P543–E554 and P567–K585. Residues L586 to F595 are compositionally biased toward basic residues.

It belongs to the PPP1R37 family.

This chain is Protein phosphatase 1 regulatory subunit 37 homolog, found in Caenorhabditis elegans.